A 209-amino-acid chain; its full sequence is Cyclin-dependent kinase inhibitor 2 (209 aa).

The required for nuclear localization stretch occupies residues 1 to 32 (MAAVRRRERDVVEENGVTTTTVKRRKMEEEVD).

It belongs to the CDI family. ICK/KRP subfamily. As to quaternary structure, specifically interacts with CDKA-1, but not with CDKB1-1. Phosphorylated.

The protein resides in the nucleus. Its subcellular location is the nucleoplasm. Its function is as follows. Binds and inhibits CYCD2-1/CDKA-1 complex kinase activity. Regulates cell division which is crucial for plant growth, development and morphogenesis. May regulate early lateral root initiation by blocking the G1/S phase transition. Controls the mitosis-to-endocycle transition and the onset of the endoreduplication cycle during leaf development through inhibition of mitotic CDKA-1 kinase complexes. Specifically targets CDKA-1. The protein is Cyclin-dependent kinase inhibitor 2 (KRP2) of Arabidopsis thaliana (Mouse-ear cress).